The chain runs to 629 residues: Dihydroxy-acid dehydratase 2 (629 aa).

D82 contacts Mg(2+). Position 123 (C123) interacts with [2Fe-2S] cluster. Mg(2+)-binding residues include D124 and K125. Position 125 is an N6-carboxylysine (K125). C197 is a [2Fe-2S] cluster binding site. A Mg(2+)-binding site is contributed by E493. The Proton acceptor role is filled by S519. The disordered stretch occupies residues 603-629 (DKGGVRRLPPDELGGPEAAFDTQTRAG).

This sequence belongs to the IlvD/Edd family. Homodimer. [2Fe-2S] cluster serves as cofactor. It depends on Mg(2+) as a cofactor.

It catalyses the reaction (2R)-2,3-dihydroxy-3-methylbutanoate = 3-methyl-2-oxobutanoate + H2O. The catalysed reaction is (2R,3R)-2,3-dihydroxy-3-methylpentanoate = (S)-3-methyl-2-oxopentanoate + H2O. The protein operates within amino-acid biosynthesis; L-isoleucine biosynthesis; L-isoleucine from 2-oxobutanoate: step 3/4. Its pathway is amino-acid biosynthesis; L-valine biosynthesis; L-valine from pyruvate: step 3/4. Functions in the biosynthesis of branched-chain amino acids. Catalyzes the dehydration of (2R,3R)-2,3-dihydroxy-3-methylpentanoate (2,3-dihydroxy-3-methylvalerate) into 2-oxo-3-methylpentanoate (2-oxo-3-methylvalerate) and of (2R)-2,3-dihydroxy-3-methylbutanoate (2,3-dihydroxyisovalerate) into 2-oxo-3-methylbutanoate (2-oxoisovalerate), the penultimate precursor to L-isoleucine and L-valine, respectively. This is Dihydroxy-acid dehydratase 2 from Nocardia farcinica (strain IFM 10152).